Consider the following 750-residue polypeptide: Alpha-galactosidase C (750 aa).

An N-terminal signal peptide occupies residues 1-26; the sequence is MFRSTATVAAATAMGLLTATGHGSLA. N-linked (GlcNAc...) asparagine glycans are attached at residues Asn-58, Asn-162, Asn-186, Asn-194, Asn-366, Asn-428, Asn-432, and Asn-453. Asp-511 serves as the catalytic Nucleophile. The active-site Proton donor is the Asp-573.

The protein belongs to the glycosyl hydrolase 36 family. As to quaternary structure, homotetramer. Mg(2+) is required as a cofactor. It depends on NAD(+) as a cofactor.

It localises to the secreted. It carries out the reaction Hydrolysis of terminal, non-reducing alpha-D-galactose residues in alpha-D-galactosides, including galactose oligosaccharides, galactomannans and galactolipids.. Functionally, hydrolyzes a variety of simple alpha-D-galactoside as well as more complex molecules such as oligosaccharides and polysaccharides. Active on paranitrophenyl-alpha-galactoside, raffinose, locust bean gum and gum guar. In Emericella nidulans (strain FGSC A4 / ATCC 38163 / CBS 112.46 / NRRL 194 / M139) (Aspergillus nidulans), this protein is Alpha-galactosidase C (aglC).